We begin with the raw amino-acid sequence, 108 residues long: Nucleoid-associated protein PSHAa1202 (108 aa).

2 disordered regions span residues 1 to 20 and 87 to 108; these read MFKG…QDRM and TQER…KMPF.

Belongs to the YbaB/EbfC family. In terms of assembly, homodimer.

The protein resides in the cytoplasm. The protein localises to the nucleoid. Its function is as follows. Binds to DNA and alters its conformation. May be involved in regulation of gene expression, nucleoid organization and DNA protection. This is Nucleoid-associated protein PSHAa1202 from Pseudoalteromonas translucida (strain TAC 125).